A 658-amino-acid polypeptide reads, in one-letter code: Vertnin (658 aa).

The protein belongs to the vertnin family.

It is found in the nucleus. Acts as a transcription factor that regulates development of thoracic vertebrae. The polypeptide is Vertnin (VRTN) (Bos taurus (Bovine)).